The primary structure comprises 229 residues: V-type proton ATPase subunit E (229 aa).

Belongs to the V-ATPase E subunit family. As to quaternary structure, V-ATPase is a heteromultimeric enzyme composed of a peripheral catalytic V1 complex (components A to H) attached to an integral membrane V0 proton pore complex (components: a, c, c', c'' and d).

Its function is as follows. Subunit of the peripheral V1 complex of vacuolar ATPase essential for assembly or catalytic function. V-ATPase is responsible for acidifying a variety of intracellular compartments in eukaryotic cells. This chain is V-type proton ATPase subunit E (VATE), found in Spinacia oleracea (Spinach).